Here is a 154-residue protein sequence, read N- to C-terminus: Large ribosomal subunit protein uL22c (154 aa).

It belongs to the universal ribosomal protein uL22 family. In terms of assembly, part of the 50S ribosomal subunit.

It localises to the plastid. It is found in the chloroplast. Its function is as follows. This protein binds specifically to 23S rRNA. In terms of biological role, the globular domain of the protein is located near the polypeptide exit tunnel on the outside of the subunit, while an extended beta-hairpin is found that lines the wall of the exit tunnel in the center of the 70S ribosome. This Jasminum nudiflorum (Winter jasmine) protein is Large ribosomal subunit protein uL22c (rpl22).